We begin with the raw amino-acid sequence, 231 residues long: Cytidylate kinase 1 (231 aa).

7–15 (GPSGAGKGT) contacts ATP.

Belongs to the cytidylate kinase family. Type 1 subfamily.

The protein localises to the cytoplasm. It catalyses the reaction CMP + ATP = CDP + ADP. The catalysed reaction is dCMP + ATP = dCDP + ADP. In Haemophilus influenzae (strain ATCC 51907 / DSM 11121 / KW20 / Rd), this protein is Cytidylate kinase 1.